Consider the following 661-residue polypeptide: L-type lectin-domain containing receptor kinase V.5 (661 aa).

Positions 1-25 (MSRELIILCQPILVLFLTLFYNSHG) are cleaved as a signal peptide. Topologically, residues 26–282 (YFVSQGSVGI…KTSNRTKTVL (257 aa)) are extracellular. The interval 30–250 (QGSVGIGFNG…GAIHYLMGWL (221 aa)) is legume-lectin like. N-linked (GlcNAc...) asparagine glycosylation is found at Asn45, Asn64, Asn116, Asn198, and Asn276. The chain crosses the membrane as a helical span at residues 283–303 (AVCLTVSVFAAFVASWIGFVF). Topologically, residues 304 to 661 (YLRHKKVKEV…TDSSFVSHGR (358 aa)) are cytoplasmic. The 259-residue stretch at 338-596 (FKEKQLLGKG…LGVLCSHQAA (259 aa)) folds into the Protein kinase domain. ATP is bound by residues 344–352 (LGKGGFGQV) and Lys367. The active-site Proton acceptor is Asp464.

In the C-terminal section; belongs to the protein kinase superfamily. Ser/Thr protein kinase family. This sequence in the N-terminal section; belongs to the leguminous lectin family. In terms of processing, autophosphorylated on a Ser residue. In terms of tissue distribution, expressed at low levels in stems, leaves, flowers and siliques.

It localises to the cell membrane. The enzyme catalyses L-seryl-[protein] + ATP = O-phospho-L-seryl-[protein] + ADP + H(+). The catalysed reaction is L-threonyl-[protein] + ATP = O-phospho-L-threonyl-[protein] + ADP + H(+). Confers resistance to the pathogenic oomycetes Phytophthora infestans and Phytophthora capsici, but confers susceptibility to the pathogenic bacteria Pseudomonas syringae. In Arabidopsis thaliana (Mouse-ear cress), this protein is L-type lectin-domain containing receptor kinase V.5.